The chain runs to 302 residues: MPINIPKDLPAKEILEQENIFVMDEERAYSQDIRPLNIVILNLMPEKEKAETQLLRLLGNSPLQVNVTFLRPATHESKTTSKHHLEQFYTIFPHIRHRKFDGMIITGAPVEQMPFEKVTYWSELTEIMEWTKTNVTSTLHICWGAQAGLYYHYGIPKYPLPQKCFGIFEHSLEVKNVKLLRGFDDVFRMPHSRHTDVKREDIEKIPELTILSVSEKAGVCLVASNDGKQIFLTGHPEYDATTLKEEYERDLAKGLPIHIPESYFPNDDPTKEPLNTWRSHANLLFVNWLNYYVYQETPYEWE.

The Acyl-thioester intermediate role is filled by Cys-142. Residues Lys-163 and Ser-192 each coordinate substrate. The Proton acceptor role is filled by His-235. The active site involves Glu-237. Arg-249 contacts substrate.

It belongs to the MetA family.

Its subcellular location is the cytoplasm. It carries out the reaction L-homoserine + acetyl-CoA = O-acetyl-L-homoserine + CoA. The protein operates within amino-acid biosynthesis; L-methionine biosynthesis via de novo pathway; O-acetyl-L-homoserine from L-homoserine: step 1/1. Transfers an acetyl group from acetyl-CoA to L-homoserine, forming acetyl-L-homoserine. This chain is Homoserine O-acetyltransferase, found in Geobacillus sp. (strain WCH70).